The sequence spans 73 residues: Aldehyde dehydrogenase (73 aa).

Belongs to the aldehyde dehydrogenase family.

The enzyme catalyses an aldehyde + NAD(+) + H2O = a carboxylate + NADH + 2 H(+). It participates in alcohol metabolism; ethanol degradation; acetate from ethanol: step 2/2. The polypeptide is Aldehyde dehydrogenase (Geobacillus stearothermophilus (Bacillus stearothermophilus)).